The sequence spans 271 residues: DNA-directed RNA polymerase subunit Rpo3 (271 aa).

It belongs to the archaeal Rpo3/eukaryotic RPB3 RNA polymerase subunit family. As to quaternary structure, part of the RNA polymerase complex.

It is found in the cytoplasm. It carries out the reaction RNA(n) + a ribonucleoside 5'-triphosphate = RNA(n+1) + diphosphate. DNA-dependent RNA polymerase (RNAP) catalyzes the transcription of DNA into RNA using the four ribonucleoside triphosphates as substrates. This is DNA-directed RNA polymerase subunit Rpo3 from Picrophilus torridus (strain ATCC 700027 / DSM 9790 / JCM 10055 / NBRC 100828 / KAW 2/3).